A 317-amino-acid chain; its full sequence is Acetyl-coenzyme A carboxylase carboxyl transferase subunit alpha (317 aa).

Positions 40 to 293 constitute a CoA carboxyltransferase C-terminal domain; the sequence is LEVRVREAIV…GDVIANALGE (254 aa).

It belongs to the AccA family. As to quaternary structure, acetyl-CoA carboxylase is a heterohexamer composed of biotin carboxyl carrier protein (AccB), biotin carboxylase (AccC) and two subunits each of ACCase subunit alpha (AccA) and ACCase subunit beta (AccD).

It localises to the cytoplasm. It carries out the reaction N(6)-carboxybiotinyl-L-lysyl-[protein] + acetyl-CoA = N(6)-biotinyl-L-lysyl-[protein] + malonyl-CoA. It participates in lipid metabolism; malonyl-CoA biosynthesis; malonyl-CoA from acetyl-CoA: step 1/1. Component of the acetyl coenzyme A carboxylase (ACC) complex. First, biotin carboxylase catalyzes the carboxylation of biotin on its carrier protein (BCCP) and then the CO(2) group is transferred by the carboxyltransferase to acetyl-CoA to form malonyl-CoA. The chain is Acetyl-coenzyme A carboxylase carboxyl transferase subunit alpha from Rhizobium leguminosarum bv. trifolii (strain WSM2304).